The following is a 244-amino-acid chain: 2,3-bisphosphoglycerate-dependent phosphoglycerate mutase (244 aa).

Residues 8-15 (RHGESNWN), 21-22 (TG), Arg-60, 87-90 (ERHY), Lys-98, 114-115 (RR), and 181-182 (GN) contribute to the substrate site. His-9 acts as the Tele-phosphohistidine intermediate in catalysis. Glu-87 (proton donor/acceptor) is an active-site residue.

Belongs to the phosphoglycerate mutase family. BPG-dependent PGAM subfamily.

It catalyses the reaction (2R)-2-phosphoglycerate = (2R)-3-phosphoglycerate. It functions in the pathway carbohydrate degradation; glycolysis; pyruvate from D-glyceraldehyde 3-phosphate: step 3/5. Its function is as follows. Catalyzes the interconversion of 2-phosphoglycerate and 3-phosphoglycerate. The sequence is that of 2,3-bisphosphoglycerate-dependent phosphoglycerate mutase from Frankia alni (strain DSM 45986 / CECT 9034 / ACN14a).